The following is a 271-amino-acid chain: Zinc finger protein 501 (271 aa).

9 C2H2-type zinc fingers span residues Ser22–His44, Tyr50–His72, Tyr78–His100, Tyr106–His128, Tyr134–His156, Phe162–His184, Tyr190–His212, Tyr218–His240, and Tyr246–His268.

Belongs to the krueppel C2H2-type zinc-finger protein family.

Its subcellular location is the nucleus. The protein resides in the nucleolus. May be involved in transcriptional regulation. Essential for Golgi structural integrity. The chain is Zinc finger protein 501 (ZNF501) from Pongo abelii (Sumatran orangutan).